The primary structure comprises 120 residues: U15-barytoxin-Tl1c (120 aa).

Residues 1–16 form the signal peptide; sequence MKLFMVLVASFAFAVA. Cystine bridges form between cysteine 55–cysteine 73, cysteine 66–cysteine 79, cysteine 70–cysteine 118, and cysteine 72–cysteine 89.

The protein belongs to the neurotoxin 03 (Tx2) family. 03 subfamily. As to expression, expressed by the venom gland.

The protein localises to the secreted. Functionally, ion channel inhibitor. The protein is U15-barytoxin-Tl1c of Trittame loki (Brush-footed trapdoor spider).